The primary structure comprises 574 residues: MEQNITNILIKKIEELTETIYDETIRLEEPPSISLGDYSTNISFKLAKLLKKSPMVIAEELTNLLISENIEGIKEIKAVNGYINFFIDYNLYSKSGIAKISSEKDKFGQGAPKNKKVIIEHTSANPNGPLHIGHSRNAIVGDSLKRIVEFAGYVVEAQYYVNDMGRQEAIVVYGLDKFELNEQQKPDHAIGEVYFKANQLLNENPEQEEEILKLMKKYEEASEKGEENELTNKFNYAVNYALSGFKETLNNLNIHHDKFVWESSYVKNGMVQKVIQTLKDTGKVEKDEVYRLDLSEFGIDKKLVLARLNGTSLYSTRDIAYHIDKMKNCDIGINILGADHKLTAEMVNASLKLLGYNTPEVVFYEFISLPEGSMSTRRGTFISIDELYEEAKNRAVKEIKKRNETTEEEEINNIAHKIAVGAVRYNIVRISPDKAMVFRWDDALDFEKVGAPVIQYAHARCCRILEKENTNENKPIDATELFEYDLNEHEKLLIKILLKFPKIVEKSADAKKPQIMATYALDVAQTFNRYYANCPIFKEENKNIVYSRLELVKCTKTIIENALNLLGIECPGKM.

The 'HIGH' region motif lies at 124-134 (ANPNGPLHIGH).

Belongs to the class-I aminoacyl-tRNA synthetase family.

It is found in the cytoplasm. It catalyses the reaction tRNA(Arg) + L-arginine + ATP = L-arginyl-tRNA(Arg) + AMP + diphosphate. In Methanococcus aeolicus (strain ATCC BAA-1280 / DSM 17508 / OCM 812 / Nankai-3), this protein is Arginine--tRNA ligase.